The chain runs to 152 residues: Large ribosomal subunit protein bL9 (152 aa).

It belongs to the bacterial ribosomal protein bL9 family.

Binds to the 23S rRNA. This Mycoplasmopsis synoviae (strain 53) (Mycoplasma synoviae) protein is Large ribosomal subunit protein bL9.